Reading from the N-terminus, the 72-residue chain is Translation initiation factor IF-1 (72 aa).

The 72-residue stretch at 1–72 folds into the S1-like domain; the sequence is MAKEDNIEMQ…SKGRIVFRAR (72 aa).

It belongs to the IF-1 family. In terms of assembly, component of the 30S ribosomal translation pre-initiation complex which assembles on the 30S ribosome in the order IF-2 and IF-3, IF-1 and N-formylmethionyl-tRNA(fMet); mRNA recruitment can occur at any time during PIC assembly.

The protein localises to the cytoplasm. In terms of biological role, one of the essential components for the initiation of protein synthesis. Stabilizes the binding of IF-2 and IF-3 on the 30S subunit to which N-formylmethionyl-tRNA(fMet) subsequently binds. Helps modulate mRNA selection, yielding the 30S pre-initiation complex (PIC). Upon addition of the 50S ribosomal subunit IF-1, IF-2 and IF-3 are released leaving the mature 70S translation initiation complex. The protein is Translation initiation factor IF-1 of Shewanella frigidimarina (strain NCIMB 400).